A 65-amino-acid polypeptide reads, in one-letter code: Large ribosomal subunit protein bL35 (65 aa).

Positions 1 to 25 (MPKLKTKSSAAKRFKKTGKGGFKHR) are disordered.

It belongs to the bacterial ribosomal protein bL35 family.

The polypeptide is Large ribosomal subunit protein bL35 (Francisella tularensis subsp. holarctica (strain FTNF002-00 / FTA)).